The following is a 463-amino-acid chain: FAD-dependent monooxygenase str9 (463 aa).

The FAD site is built by Glu37, Gly50, and Arg114. Arg200 is an active-site residue. Asp334 contributes to the FAD binding site.

It belongs to the paxM FAD-dependent monooxygenase family.

Its pathway is mycotoxin biosynthesis. Functionally, FAD-dependent monooxygenase; part of the gene cluster that mediates the biosynthesis of strobilurin A, an antifungal polyketide that contains a key beta-methoxyacrylate toxophore that targets the complex III of the mitochondrial electron transport chain. Strobilurin biosynthesis begins with construction of benzoyl CoA by step-wise elimination of ammonia from phenylalanine by the phenylalanine ammonia-lyase str11, oxygenation by str8 and retro-Claisen reaction to form benzoic acid, which is activated to its CoA thiolester benzoyl CoA by the dedicated CoA ligase str10. Benzoyl CoA forms the starter unit for the highly reducing polyketide synthase stpks1 that produces the polyketide prestrobilutin A. The FAD-dependent oxygenase str9 then catalyzes the key oxidative rearrangement responsible for the creation of the beta-methoxyacrylate toxophore. Str9 performs epoxidation of the 2,3 olefin of prestrobilutin A, followed by Meinwald rearrangement to furnish the aldehyde intermediate. Rapid enolization of the aldehyde intermediate would give the beta-methoxyacrylate skeleton and methylations catalyzed by str2 and str3 complete the synthesis and lead to the production of strobilurin A. The short-chain dehydrogenase stl2 and the dehydrogenase str4 play a role in the shunt pathway leading to the production of bolineol. The cluster encodes no obvious halogenase gene that could be involved in production of strobilurin B, nor any obvious dimethylallyl-transferase that could be involved in the production of strobilurin G. It is possible that unknown proteins encoded in, or near, the cluster (such as str1 or stl1) may form new classes of halogenases or dimethylally-transferases, or that the responsible genes are located elsewhere on the genome. Similarly, proteins encoded by str5/str6 hydrolases appear to have no chemical role in the biosynthesis of strobilurin A. Finally, no obvious self-resistance gene is found within the cluster. This is FAD-dependent monooxygenase str9 from Strobilurus tenacellus.